Consider the following 92-residue polypeptide: Large ribosomal subunit protein bL31 (92 aa).

Positions 66–92 are disordered; it reads GMGSANPDVDAPAPKKAAKKSDAESDS. A compositionally biased stretch (low complexity) spans 70-80; sequence ANPDVDAPAPK.

It belongs to the bacterial ribosomal protein bL31 family. Type A subfamily. Part of the 50S ribosomal subunit.

Its function is as follows. Binds the 23S rRNA. This is Large ribosomal subunit protein bL31 from Synechococcus sp. (strain RCC307).